Reading from the N-terminus, the 701-residue chain is Eukaryotic peptide chain release factor GTP-binding subunit (701 aa).

Over residues 1-25 the composition is skewed to polar residues; that stretch reads MSDDQQYNQDKLSQDFQNTSIGSGE. Disordered regions lie at residues 1–63, 91–124, and 164–259; these read MSDD…YQGG, NQGYQGYQNNNRGGYNNYNNRGGYNNYNNYNQQD, and KLAN…VIQE. Residues 20 to 131 form a several sort of repeats region; it reads SIGSGEQQQQ…QQDQQPVQNQ (112 aa). Low complexity predominate over residues 26–40; sequence QQQQSYQQYQQQPQQ. The span at 41-54 shows a compositional bias: polar residues; that stretch reads NNFNANSAPTFTPS. The charged stretch occupies residues 132-271; sequence GMSLADFQKQ…DEVDEEVVKD (140 aa). Over residues 170–224 the composition is skewed to basic and acidic residues; that stretch reads KAPETESKEATPAATEKEATPAATEKEATPAATEKEATPAATEKETTPAPAKKEA. Residues 228–252 are compositionally biased toward polar residues; it reads SVKSESKPASKSTSKVATKESTPVT. Residues 276 to 501 form the tr-type G domain; it reads KDHVSIIFMG…FLDNMKTMQR (226 aa). The segment at 285–292 is G1; sequence GHVDAGKS. 285–292 is a binding site for GTP; it reads GHVDAGKS. The tract at residues 341 to 345 is G2; that stretch reads GKTIE. Position 359 is a phosphothreonine (Thr-359). Positions 362–365 are G3; that stretch reads DAPG. Residues 362–366 and 424–427 each bind GTP; these read DAPGH and NKMD. The tract at residues 424–427 is G4; sequence NKMD. The segment at 465–467 is G5; sequence SGY.

The protein belongs to the TRAFAC class translation factor GTPase superfamily. Classic translation factor GTPase family. ERF3 subfamily.

It localises to the cytoplasm. Its function is as follows. Involved in translation termination. Stimulates the activity of ERF1. Binds guanine nucleotides. The protein is Eukaryotic peptide chain release factor GTP-binding subunit (SUP35) of Debaryomyces hansenii (strain ATCC 36239 / CBS 767 / BCRC 21394 / JCM 1990 / NBRC 0083 / IGC 2968) (Yeast).